The chain runs to 391 residues: N-acetylaspartylglutamate synthase A (391 aa).

The ATP-grasp domain occupies 115 to 300 (FQELAGHGVP…VGGIIADYTM (186 aa)). Residues Lys154, 189–199 (QKYVKESHGKD), and Arg215 contribute to the ATP site. Residues Asp260, Glu273, and Asn275 each contribute to the Mg(2+) site. The Mn(2+) site is built by Asp260, Glu273, and Asn275. Ser319 bears the Phosphoserine mark. The span at 341-350 (TINSGSTSSE) shows a compositional bias: polar residues. The disordered stretch occupies residues 341–379 (TINSGSTSSESEPELGEIRDSSASTMGAPPSMLPEPGYN).

The protein belongs to the RimK family. The cofactor is Mg(2+). Mn(2+) is required as a cofactor.

The protein resides in the cytoplasm. The catalysed reaction is N-acetyl-L-aspartate + L-glutamate + ATP = N-acetyl-L-aspartyl-L-glutamate + ADP + phosphate + H(+). It carries out the reaction N-acetyl-L-aspartate + 2 L-glutamate + 2 ATP = N-acetyl-L-aspartyl-L-glutamyl-L-glutamate + 2 ADP + 2 phosphate + 2 H(+). Functionally, catalyzes the synthesis of N-acetyl-L-aspartyl-L-glutamate (NAAG) and N-acetyl-L-aspartyl-L-glutamyl-L-glutamate. The sequence is that of N-acetylaspartylglutamate synthase A (RIMKLA) from Homo sapiens (Human).